A 299-amino-acid chain; its full sequence is Protease HtpX homolog (299 aa).

2 helical membrane-spanning segments follow: residues 7 to 24 and 29 to 46; these read GILMAVMTALFLGVGALI and GAIIALIVAALMNLFTFW. H130 is a Zn(2+) binding site. E131 is a catalytic residue. Position 134 (H134) interacts with Zn(2+). 2 consecutive transmembrane segments (helical) span residues 145–165 and 174–194; these read VTATFAGAISMLANFAFFFGG and PVGIVGTLALMILAPLAAGLV. E203 lines the Zn(2+) pocket.

The protein belongs to the peptidase M48B family. It depends on Zn(2+) as a cofactor.

The protein resides in the cell inner membrane. This chain is Protease HtpX homolog, found in Cereibacter sphaeroides (strain ATCC 17025 / ATH 2.4.3) (Rhodobacter sphaeroides).